A 450-amino-acid polypeptide reads, in one-letter code: Probable ECA polymerase (450 aa).

Transmembrane regions (helical) follow at residues 6 to 26 (FSGL…LTWF), 37 to 57 (VFFS…TSVL), 63 to 83 (VGVA…CFYA), 118 to 138 (VILM…NGFL), 155 to 175 (GVAL…VYFL), 181 to 201 (AWLF…MIVG), 207 to 227 (IIIA…ISLW), 228 to 248 (MLAA…LKRY), 341 to 361 (LVVM…GLII), 378 to 398 (YKAA…IVLA), and 410 to 430 (VFFI…YWLF).

It belongs to the WzyE family. As to quaternary structure, probably part of a complex composed of WzxE, WzyE and WzzE.

The protein resides in the cell inner membrane. It functions in the pathway bacterial outer membrane biogenesis; enterobacterial common antigen biosynthesis. Its function is as follows. Probably involved in the polymerization of enterobacterial common antigen (ECA) trisaccharide repeat units. The chain is Probable ECA polymerase from Escherichia fergusonii (strain ATCC 35469 / DSM 13698 / CCUG 18766 / IAM 14443 / JCM 21226 / LMG 7866 / NBRC 102419 / NCTC 12128 / CDC 0568-73).